A 475-amino-acid polypeptide reads, in one-letter code: MSPQTETKAGVGFKAGVKEYKLTYYTPDYEPHDHDILAAFRVTPQPGGPPEEAGAAVAAESSTGTWTPVWTDGLTWFDRYKGRSYHIDAVPGGENPFIAYVAYPLDLFEEGSVANMFSSIVGNVFGFKALRALRLEDLRIPPAYTKTFQGPPHGIQVERDKLNKYGRPLLGCTIKPKLGLSAKNYGRAVYECLRGGLDFTKDDENVNSQPFMRWRDRFLFCAEALFKAQSETVEIKGHYSNATAGTCEEMIKRAVFADELGVPIVMHDYLTGGFTANTSLAHYCRDNGLLLHIHRAMHAVIDRQKNHGIHFRVLAKALRLSGGDHIHSGTVVGKLEGERDITLGFVDLLRDDFVEKDRSRGIYFTQPWVSLPGVIPVASGGIHVWHMPALTEIFGDDSVLQFGGGTLGTPWGNAPGAVANRVALEACVQARNEGRDLAREGNEIIRQAAKWSPELAAACEVWKEIEFEYEAVDTL.

Residues 1 to 2 (MS) constitute a propeptide that is removed on maturation. Pro-3 carries the N-acetylproline modification. Lys-14 carries the post-translational modification N6,N6,N6-trimethyllysine. Positions 123 and 173 each coordinate substrate. Lys-175 functions as the Proton acceptor in the catalytic mechanism. Residue Lys-177 participates in substrate binding. Mg(2+)-binding residues include Lys-201, Asp-203, and Glu-204. N6-carboxylysine is present on Lys-201. His-294 serves as the catalytic Proton acceptor. Residues Arg-295, His-327, and Ser-379 each coordinate substrate.

The protein belongs to the RuBisCO large chain family. Type I subfamily. As to quaternary structure, heterohexadecamer of 8 large chains and 8 small chains; disulfide-linked. The disulfide link is formed within the large subunit homodimers. Requires Mg(2+) as cofactor. Post-translationally, the disulfide bond which can form in the large chain dimeric partners within the hexadecamer appears to be associated with oxidative stress and protein turnover.

The protein localises to the plastid. The protein resides in the chloroplast. The enzyme catalyses 2 (2R)-3-phosphoglycerate + 2 H(+) = D-ribulose 1,5-bisphosphate + CO2 + H2O. It catalyses the reaction D-ribulose 1,5-bisphosphate + O2 = 2-phosphoglycolate + (2R)-3-phosphoglycerate + 2 H(+). Functionally, ruBisCO catalyzes two reactions: the carboxylation of D-ribulose 1,5-bisphosphate, the primary event in carbon dioxide fixation, as well as the oxidative fragmentation of the pentose substrate in the photorespiration process. Both reactions occur simultaneously and in competition at the same active site. The protein is Ribulose bisphosphate carboxylase large chain of Plumbago auriculata (Cape leadwort).